We begin with the raw amino-acid sequence, 444 residues long: N-succinylarginine dihydrolase (444 aa).

Substrate is bound by residues 19 to 28, Asn-110, and 137 to 138; these read AGLSFGNVAS and HR. Residue Glu-174 is part of the active site. Arg-214 contributes to the substrate binding site. His-250 is a catalytic residue. Substrate is bound by residues Asp-252 and Asn-362. Catalysis depends on Cys-368, which acts as the Nucleophile.

Belongs to the succinylarginine dihydrolase family. As to quaternary structure, homodimer.

The enzyme catalyses N(2)-succinyl-L-arginine + 2 H2O + 2 H(+) = N(2)-succinyl-L-ornithine + 2 NH4(+) + CO2. It functions in the pathway amino-acid degradation; L-arginine degradation via AST pathway; L-glutamate and succinate from L-arginine: step 2/5. In terms of biological role, catalyzes the hydrolysis of N(2)-succinylarginine into N(2)-succinylornithine, ammonia and CO(2). The protein is N-succinylarginine dihydrolase of Shewanella putrefaciens (strain CN-32 / ATCC BAA-453).